Consider the following 422-residue polypeptide: UPF0761 membrane protein Paes_1471 (422 aa).

Helical transmembrane passes span 47 to 67 (LLSIVPLMAVILSVLSVSPVF), 103 to 123 (SVPTIGGLSLFIIALFLISTI), 143 to 163 (FTLYWTVLTLGPIFIGSSLVA), 185 to 205 (LLLLPVMNTFLAFFLLYILVP), 208 to 228 (KVKFVHAFSGAILATLLFEFS), and 247 to 267 (GALSVIPLLFFWIYLIWVVAL).

The protein belongs to the UPF0761 family.

It localises to the cell inner membrane. This Prosthecochloris aestuarii (strain DSM 271 / SK 413) protein is UPF0761 membrane protein Paes_1471.